The chain runs to 421 residues: MDKLKKYTPDGMRDILFKECEEKLYVEKKLRNLYKLNGFSEIISPTLEFYDVFNFENQPIAQEKMYKLFDRNGRILVLKPDMTMPIGRIVATKVNYKDYPLKLCYTSNIFRINENLNGKTSEITQSGIEIIGIENIKADAEVVITAIESLLQLGLKNFKIELGQSKFFKEIIKNENINKEEVFTLKNLIENKNYVALKDYLKEKTKIIKADTIKILEQLPRMFGDIGVVYEAKNLVNDNEQLKALDEILSLYKIIDKVGLSKYVSIDLGMIQDIDYYTGVIFKGYVEGVGDYILSGGRYDKLIGNFGCDLPSTGFGINIDNIIEALRIYEVLNIRKFRNVILHCENKYLNRAYKIANRVRKNNIICEISLRDTIEDTIKYARSKCVDKIIFIDNREFIKIYDINFNKSKEVIIDNFLEELI.

The protein belongs to the class-II aminoacyl-tRNA synthetase family. HisZ subfamily. As to quaternary structure, heteromultimer composed of HisG and HisZ subunits.

Its subcellular location is the cytoplasm. It functions in the pathway amino-acid biosynthesis; L-histidine biosynthesis; L-histidine from 5-phospho-alpha-D-ribose 1-diphosphate: step 1/9. Its function is as follows. Required for the first step of histidine biosynthesis. May allow the feedback regulation of ATP phosphoribosyltransferase activity by histidine. The sequence is that of ATP phosphoribosyltransferase regulatory subunit from Clostridium novyi (strain NT).